A 347-amino-acid polypeptide reads, in one-letter code: NADH-ubiquinone oxidoreductase chain 2 (347 aa).

Helical transmembrane passes span 13 to 33 (IILG…WIGF), 59 to 79 (YFLT…TNLL), 96 to 116 (AVMT…FWVP), 122 to 142 (IPLS…LSVL), 149 to 169 (VSPT…GWGG), 178 to 198 (ILAY…AYNP), 201 to 221 (TLLN…LFMF), 247 to 267 (IMLS…WMII), 274 to 294 (ESLL…YFYM), and 323 to 343 (VPLL…APAL).

This sequence belongs to the complex I subunit 2 family. As to quaternary structure, core subunit of respiratory chain NADH dehydrogenase (Complex I) which is composed of 45 different subunits. Interacts with TMEM242.

Its subcellular location is the mitochondrion inner membrane. The enzyme catalyses a ubiquinone + NADH + 5 H(+)(in) = a ubiquinol + NAD(+) + 4 H(+)(out). In terms of biological role, core subunit of the mitochondrial membrane respiratory chain NADH dehydrogenase (Complex I) which catalyzes electron transfer from NADH through the respiratory chain, using ubiquinone as an electron acceptor. Essential for the catalytic activity and assembly of complex I. The polypeptide is NADH-ubiquinone oxidoreductase chain 2 (Megaderma spasma (Lesser false vampire bat)).